The primary structure comprises 310 residues: MPPRQLRIGTRASQLALWQANWVKSELEKRYPAMEVTLTKIKTMGDRILDVPLAQVGGKGLFVKEIEEAMLRGEIDIAVHSMKDVPTEFPEGLGLYCITEREDPRDAVVSRAARFSHLPPGARVGTSALRRQAQLLHARPDLEMVTIRGNVETRIRKLDEENLDAVILAAAGLKRLGLTQRVAEYLDVEFSIPAIGQGALGIECRLSDPVVTEAIAFFNHPDTSHAVRAERALLRRCQGGCQVPIAAHGTIRGGELRLVGLIAAVDGREFVRDEISGPVDQCEHLGEELADRLLSRGGRAILEEVYQREI.

Cys241 is subject to S-(dipyrrolylmethanemethyl)cysteine.

The protein belongs to the HMBS family. As to quaternary structure, monomer. Dipyrromethane serves as cofactor.

The enzyme catalyses 4 porphobilinogen + H2O = hydroxymethylbilane + 4 NH4(+). It participates in porphyrin-containing compound metabolism; protoporphyrin-IX biosynthesis; coproporphyrinogen-III from 5-aminolevulinate: step 2/4. Functionally, tetrapolymerization of the monopyrrole PBG into the hydroxymethylbilane pre-uroporphyrinogen in several discrete steps. This Pelobacter propionicus (strain DSM 2379 / NBRC 103807 / OttBd1) protein is Porphobilinogen deaminase.